Here is a 227-residue protein sequence, read N- to C-terminus: UMP-CMP kinase (227 aa).

Residue 35–40 participates in ATP binding; the sequence is GAGKGT. Residues 55–85 form an NMP region; the sequence is SAGDLLRAEQHREGSEYGQLIQTCIKEGSIV. A ribonucleoside 5'-phosphate-binding positions include arginine 61, 83–85, 122–125, and glutamine 129; these read SIV and GFPR. The tract at residues 159-169 is LID; sequence ERGKTSGREDD. Arginine 160 is an ATP binding site. The a ribonucleoside 5'-phosphate site is built by arginine 166 and arginine 177. ATP is bound at residue valine 205.

This sequence belongs to the adenylate kinase family. UMP-CMP kinase subfamily. As to quaternary structure, monomer. The cofactor is Mg(2+).

The protein localises to the cytoplasm. Its subcellular location is the nucleus. It carries out the reaction UMP + ATP = UDP + ADP. Catalyzes the phosphorylation of pyrimidine nucleoside monophosphates at the expense of ATP. Plays an important role in de novo pyrimidine nucleotide biosynthesis. Has preference for UMP and CMP as phosphate acceptors, but can also use AMP and dCMP to a lesser extent. May play a role during the formation of basidiospores in the gill tissue. The sequence is that of UMP-CMP kinase (uck1) from Lentinula edodes (Shiitake mushroom).